The following is a 101-amino-acid chain: Small ribosomal subunit protein uS14 (101 aa).

The protein belongs to the universal ribosomal protein uS14 family. In terms of assembly, part of the 30S ribosomal subunit. Contacts proteins S3 and S10.

Functionally, binds 16S rRNA, required for the assembly of 30S particles and may also be responsible for determining the conformation of the 16S rRNA at the A site. The polypeptide is Small ribosomal subunit protein uS14 (Shewanella frigidimarina (strain NCIMB 400)).